Consider the following 489-residue polypeptide: UDP-N-acetylmuramoyl-L-alanyl-D-glutamate--2,6-diaminopimelate ligase (489 aa).

UDP-N-acetyl-alpha-D-muramoyl-L-alanyl-D-glutamate is bound at residue S30. 108–114 (GTNGKTT) contributes to the ATP binding site. Residues N149, 150–151 (TT), S177, Q183, and R185 each bind UDP-N-acetyl-alpha-D-muramoyl-L-alanyl-D-glutamate. K217 is subject to N6-carboxylysine. Meso-2,6-diaminopimelate-binding positions include R383, 407-410 (DNPR), G459, and E463. A Meso-diaminopimelate recognition motif motif is present at residues 407–410 (DNPR).

Belongs to the MurCDEF family. MurE subfamily. It depends on Mg(2+) as a cofactor. Carboxylation is probably crucial for Mg(2+) binding and, consequently, for the gamma-phosphate positioning of ATP.

It localises to the cytoplasm. It catalyses the reaction UDP-N-acetyl-alpha-D-muramoyl-L-alanyl-D-glutamate + meso-2,6-diaminopimelate + ATP = UDP-N-acetyl-alpha-D-muramoyl-L-alanyl-gamma-D-glutamyl-meso-2,6-diaminopimelate + ADP + phosphate + H(+). The protein operates within cell wall biogenesis; peptidoglycan biosynthesis. Functionally, catalyzes the addition of meso-diaminopimelic acid to the nucleotide precursor UDP-N-acetylmuramoyl-L-alanyl-D-glutamate (UMAG) in the biosynthesis of bacterial cell-wall peptidoglycan. The protein is UDP-N-acetylmuramoyl-L-alanyl-D-glutamate--2,6-diaminopimelate ligase of Geobacillus kaustophilus (strain HTA426).